Here is a 232-residue protein sequence, read N- to C-terminus: Platelet-activating factor acetylhydrolase IB subunit alpha1 (232 aa).

A disordered region spans residues 1-20; that stretch reads MSGEGENPASKPTPVQDVQG. Ser-2 is subject to N-acetylserine. Ser-2 carries the phosphoserine modification. Residues Ser-48, Asp-193, and His-196 contribute to the active site.

The protein belongs to the 'GDSL' lipolytic enzyme family. Platelet-activating factor acetylhydrolase IB beta/gamma subunits subfamily. In terms of assembly, forms a catalytic dimer which is either homodimer (alpha1/alpha1 homodimer) or heterodimer with PAFAH1B2 (alpha1/alpha2 heterodimer). Component of the cytosolic (PAF-AH (I)) heterotetrameric enzyme, which is composed of PAFAH1B1 (beta), PAFAH1B2 (alpha2) and PAFAH1B3 (alpha1) subunits. The catalytic activity of the enzyme resides in the alpha1 (PAFAH1B3) and alpha2 (PAFAH1B2) subunits, whereas the beta subunit (PAFAH1B1) has regulatory activity. Trimer formation is not essential for the catalytic activity. Interacts with VLDLR; this interaction may modulate the Reelin pathway. In terms of tissue distribution, expressed in brain, spleen, lung, liver, kidney and testis. Not expressed in heart and skeletal muscle. Expressed in fetal brain as heterodimer. Not expressed in adult tissues. Expressed exclusively in granule cells.

The protein resides in the cytoplasm. The enzyme catalyses a 1-O-alkyl-2-acetyl-sn-glycero-3-phosphocholine + H2O = a 1-O-alkyl-sn-glycero-3-phosphocholine + acetate + H(+). It carries out the reaction 1-O-hexadecyl-2-acetyl-sn-glycero-3-phosphocholine + H2O = 1-O-hexadecyl-sn-glycero-3-phosphocholine + acetate + H(+). It catalyses the reaction 1-O-hexadecyl-2-acetyl-sn-glycero-3-phosphate + H2O = 1-O-hexadecyl-sn-glycero-3-phosphate + acetate + H(+). With respect to regulation, beta subunit (PAFAH1B1) inhibits the acetylhydrolase activity of the alpha1/alpha1 catalytic homodimer. In terms of biological role, alpha1 catalytic subunit of the cytosolic type I platelet-activating factor (PAF) acetylhydrolase (PAF-AH (I)) heterotetrameric enzyme that catalyzes the hydrolyze of the acetyl group at the sn-2 position of PAF and its analogs and modulates the action of PAF. The activity and substrate specificity of PAF-AH (I) are affected by its subunit composition. Both alpha1/alpha1 homodimer (PAFAH1B3/PAFAH1B3 homodimer) and alpha1/alpha2 heterodimer(PAFAH1B3/PAFAH1B2 heterodimer) hydrolyze 1-O-alkyl-2-acetyl-sn-glycero-3-phosphoric acid (AAGPA) more efficiently than PAF, but they have little hydrolytic activity towards 1-O-alkyl-2-acetyl-sn-glycero-3-phosphorylethanolamine (AAGPE). Plays an important role during the development of brain. The protein is Platelet-activating factor acetylhydrolase IB subunit alpha1 of Rattus norvegicus (Rat).